Here is a 226-residue protein sequence, read N- to C-terminus: 7-cyano-7-deazaguanine synthase (226 aa).

10-20 (LSGGLDSATAA) provides a ligand contact to ATP. 4 residues coordinate Zn(2+): C191, C199, C202, and C205.

This sequence belongs to the QueC family. Zn(2+) serves as cofactor.

The enzyme catalyses 7-carboxy-7-deazaguanine + NH4(+) + ATP = 7-cyano-7-deazaguanine + ADP + phosphate + H2O + H(+). It participates in purine metabolism; 7-cyano-7-deazaguanine biosynthesis. Catalyzes the ATP-dependent conversion of 7-carboxy-7-deazaguanine (CDG) to 7-cyano-7-deazaguanine (preQ(0)). This chain is 7-cyano-7-deazaguanine synthase, found in Parasynechococcus marenigrum (strain WH8102).